The chain runs to 299 residues: Sulfate adenylyltransferase subunit 2 (299 aa).

It belongs to the PAPS reductase family. CysD subfamily. In terms of assembly, sulfate-activating enzymes, NodP and NodQ, may be physically associated.

The catalysed reaction is sulfate + ATP + H(+) = adenosine 5'-phosphosulfate + diphosphate. Functionally, proposed to provide activated sulfate for transfer to nod factor. The protein is Sulfate adenylyltransferase subunit 2 (nodP) of Rhizobium sp. (strain BR816).